The chain runs to 339 residues: Glucokinase (339 aa).

16 to 21 contributes to the ATP binding site; sequence GDIGGT.

Belongs to the bacterial glucokinase family.

It localises to the cytoplasm. It carries out the reaction D-glucose + ATP = D-glucose 6-phosphate + ADP + H(+). This chain is Glucokinase, found in Rhizobium meliloti (strain 1021) (Ensifer meliloti).